The chain runs to 121 residues: Large ribosomal subunit protein uL14c (121 aa).

Belongs to the universal ribosomal protein uL14 family. In terms of assembly, part of the 50S ribosomal subunit.

It localises to the plastid. Its subcellular location is the apicoplast. Binds to 23S rRNA. In Eimeria tenella (Coccidian parasite), this protein is Large ribosomal subunit protein uL14c (rpl14).